The primary structure comprises 211 residues: Peroxiredoxin (211 aa).

The Thioredoxin domain occupies 2 to 156 (PLIGDKFPEM…IVRMIRAFRV (155 aa)). Residue Cys44 is the Cysteine sulfenic acid (-SOH) intermediate of the active site. Residue Arg119 coordinates substrate. Residues Cys198 and Cys204 are joined by a disulfide bond.

It belongs to the peroxiredoxin family. Prx6 subfamily. In terms of assembly, homodecamer. Pentamer of dimers that assemble into a ring structure.

Its subcellular location is the cytoplasm. The catalysed reaction is a hydroperoxide + [thioredoxin]-dithiol = an alcohol + [thioredoxin]-disulfide + H2O. Thiol-specific peroxidase that catalyzes the reduction of hydrogen peroxide and organic hydroperoxides to water and alcohols, respectively. Plays a role in cell protection against oxidative stress by detoxifying peroxides. In Methanothermobacter marburgensis (strain ATCC BAA-927 / DSM 2133 / JCM 14651 / NBRC 100331 / OCM 82 / Marburg) (Methanobacterium thermoautotrophicum), this protein is Peroxiredoxin.